The chain runs to 332 residues: Lipoyl synthase (332 aa).

[4Fe-4S] cluster contacts are provided by cysteine 74, cysteine 79, cysteine 85, cysteine 100, cysteine 104, cysteine 107, and serine 314. Residues 85–303 (CFGKGTATFM…EQEAYRMGFS (219 aa)) form the Radical SAM core domain.

It belongs to the radical SAM superfamily. Lipoyl synthase family. It depends on [4Fe-4S] cluster as a cofactor.

It localises to the cytoplasm. It carries out the reaction [[Fe-S] cluster scaffold protein carrying a second [4Fe-4S](2+) cluster] + N(6)-octanoyl-L-lysyl-[protein] + 2 oxidized [2Fe-2S]-[ferredoxin] + 2 S-adenosyl-L-methionine + 4 H(+) = [[Fe-S] cluster scaffold protein] + N(6)-[(R)-dihydrolipoyl]-L-lysyl-[protein] + 4 Fe(3+) + 2 hydrogen sulfide + 2 5'-deoxyadenosine + 2 L-methionine + 2 reduced [2Fe-2S]-[ferredoxin]. The protein operates within protein modification; protein lipoylation via endogenous pathway; protein N(6)-(lipoyl)lysine from octanoyl-[acyl-carrier-protein]: step 2/2. Functionally, catalyzes the radical-mediated insertion of two sulfur atoms into the C-6 and C-8 positions of the octanoyl moiety bound to the lipoyl domains of lipoate-dependent enzymes, thereby converting the octanoylated domains into lipoylated derivatives. The sequence is that of Lipoyl synthase from Verminephrobacter eiseniae (strain EF01-2).